A 244-amino-acid chain; its full sequence is Methylthioribulose-1-phosphate dehydratase (244 aa).

C104 provides a ligand contact to substrate. 2 residues coordinate Zn(2+): H122 and H124. Catalysis depends on E148, which acts as the Proton donor/acceptor. Residue H204 coordinates Zn(2+).

It belongs to the aldolase class II family. MtnB subfamily. It depends on Zn(2+) as a cofactor.

The protein localises to the cytoplasm. The catalysed reaction is 5-(methylsulfanyl)-D-ribulose 1-phosphate = 5-methylsulfanyl-2,3-dioxopentyl phosphate + H2O. It participates in amino-acid biosynthesis; L-methionine biosynthesis via salvage pathway; L-methionine from S-methyl-5-thio-alpha-D-ribose 1-phosphate: step 2/6. Its function is as follows. Catalyzes the dehydration of methylthioribulose-1-phosphate (MTRu-1-P) into 2,3-diketo-5-methylthiopentyl-1-phosphate (DK-MTP-1-P). This is Methylthioribulose-1-phosphate dehydratase from Cryptococcus neoformans var. neoformans serotype D (strain B-3501A) (Filobasidiella neoformans).